A 354-amino-acid chain; its full sequence is UDP-N-acetylglucosamine--N-acetylmuramyl-(pentapeptide) pyrophosphoryl-undecaprenol N-acetylglucosamine transferase (354 aa).

UDP-N-acetyl-alpha-D-glucosamine-binding positions include 13–15 (SGG), N125, R161, S189, I242, 261–266 (ALTVSE), and Q286.

The protein belongs to the glycosyltransferase 28 family. MurG subfamily.

The protein localises to the cell inner membrane. It carries out the reaction di-trans,octa-cis-undecaprenyl diphospho-N-acetyl-alpha-D-muramoyl-L-alanyl-D-glutamyl-meso-2,6-diaminopimeloyl-D-alanyl-D-alanine + UDP-N-acetyl-alpha-D-glucosamine = di-trans,octa-cis-undecaprenyl diphospho-[N-acetyl-alpha-D-glucosaminyl-(1-&gt;4)]-N-acetyl-alpha-D-muramoyl-L-alanyl-D-glutamyl-meso-2,6-diaminopimeloyl-D-alanyl-D-alanine + UDP + H(+). It participates in cell wall biogenesis; peptidoglycan biosynthesis. Functionally, cell wall formation. Catalyzes the transfer of a GlcNAc subunit on undecaprenyl-pyrophosphoryl-MurNAc-pentapeptide (lipid intermediate I) to form undecaprenyl-pyrophosphoryl-MurNAc-(pentapeptide)GlcNAc (lipid intermediate II). This Buchnera aphidicola subsp. Schizaphis graminum (strain Sg) protein is UDP-N-acetylglucosamine--N-acetylmuramyl-(pentapeptide) pyrophosphoryl-undecaprenol N-acetylglucosamine transferase.